Here is a 1014-residue protein sequence, read N- to C-terminus: Klotho (1014 aa).

The N-terminal stretch at 1-34 (MPARAPPRRLPRLLLLRLLSLHLLLLTLRARCLS) is a signal peptide. Residues 35–983 (AEPGQGAQTW…GCGFFQTRKS (949 aa)) lie on the Extracellular side of the membrane. Glycosyl hydrolase-1 stretches follow at residues 59-508 (LHDT…NNGF) and 517-955 (LEGT…NNGF). Asn-161, Asn-285, Asn-346, Asn-609, Asn-614, and Asn-696 each carry an N-linked (GlcNAc...) asparagine glycan. Residues 984–1004 (LLAFISFLVFAFVTSLALIYY) form a helical membrane-spanning segment. Over 1005–1014 (YSKKGRRRYK) the chain is Cytoplasmic.

This sequence belongs to the glycosyl hydrolase 1 family. Klotho subfamily. In terms of assembly, homodimer. Interacts with FGF23 and FGFR1. N-glycosylated. As to expression, present in cortical renal tubules and the parathyroid (at protein level). Strongly expressed in kidney. Expressed at low levels in brain, lung, intestine and ovaries.

It is found in the cell membrane. The protein resides in the apical cell membrane. It localises to the secreted. The enzyme catalyses a beta-D-glucuronoside + H2O = D-glucuronate + an alcohol. Functionally, may have weak glycosidase activity towards glucuronylated steroids. However, it lacks essential active site Glu residues at positions 241 and 874, suggesting it may be inactive as a glycosidase in vivo. May be involved in the regulation of calcium and phosphorus homeostasis by inhibiting the synthesis of active vitamin D. Essential factor for the specific interaction between FGF23 and FGFR1. The Klotho peptide generated by cleavage of the membrane-bound isoform may be an anti-aging circulating hormone which would extend life span by inhibiting insulin/IGF1 signaling. The polypeptide is Klotho (Kl) (Rattus norvegicus (Rat)).